A 470-amino-acid chain; its full sequence is 6-phospho-beta-galactosidase 1 (470 aa).

The D-galactose 6-phosphate site is built by Q23, H120, N163, E164, and N300. Catalysis depends on E164, which acts as the Proton donor. Residue E378 is the Nucleophile of the active site. 4 residues coordinate D-galactose 6-phosphate: S434, W435, K441, and Y443.

It belongs to the glycosyl hydrolase 1 family.

The catalysed reaction is a 6-phospho-beta-D-galactoside + H2O = D-galactose 6-phosphate + an alcohol. It participates in carbohydrate metabolism; lactose degradation; D-galactose 6-phosphate and beta-D-glucose from lactose 6-phosphate: step 1/1. This is 6-phospho-beta-galactosidase 1 from Streptococcus pneumoniae (strain ATCC BAA-255 / R6).